The sequence spans 217 residues: Nucleoside diphosphate kinase homolog 5 (217 aa).

Positions 18–151 (ERTLALIKPD…REIRFMFPHS (134 aa)) are NDK.

The protein belongs to the NDK family.

It is found in the cell projection. The protein resides in the cilium. Functionally, functions as part of axonemal radial spoke complexes that play an important part in the motility of sperm and cilia. Does not seem to have nucleoside diphosphate kinase (NDPK) activity. Exhibits a 3'-5' exonuclease activity with a preference for single-stranded DNA, suggesting roles in DNA proofreading and repair. This Danio rerio (Zebrafish) protein is Nucleoside diphosphate kinase homolog 5 (nme5).